We begin with the raw amino-acid sequence, 349 residues long: Probable L-asparaginase periplasmic (349 aa).

The first 21 residues, 1-21 (MKLTKLALCTLFGLGVSIANA), serve as a signal peptide directing secretion. An Asparaginase/glutaminase domain is found at 25–349 (PNITILATGG…KVIQQYFEDF (325 aa)). Threonine 35 (O-isoaspartyl threonine intermediate) is an active-site residue. Substrate-binding positions include serine 81 and 112–113 (TD). Cysteine 100 and cysteine 128 are joined by a disulfide.

Belongs to the asparaginase 1 family.

It is found in the periplasm. It carries out the reaction L-asparagine + H2O = L-aspartate + NH4(+). The polypeptide is Probable L-asparaginase periplasmic (ansB) (Haemophilus influenzae (strain ATCC 51907 / DSM 11121 / KW20 / Rd)).